Consider the following 117-residue polypeptide: Large ribosomal subunit protein bL20 (117 aa).

It belongs to the bacterial ribosomal protein bL20 family.

Its function is as follows. Binds directly to 23S ribosomal RNA and is necessary for the in vitro assembly process of the 50S ribosomal subunit. It is not involved in the protein synthesizing functions of that subunit. This Rickettsia bellii (strain OSU 85-389) protein is Large ribosomal subunit protein bL20.